The sequence spans 25 residues: Small ribosomal subunit protein eS32B (25 aa).

Residues 1-25 (MRAKWRKKRTRRLKRKRRKVRARSK) form a disordered region.

This sequence belongs to the eukaryotic ribosomal protein eS32 family. In terms of assembly, component of the small ribosomal subunit (SSU). Mature yeast ribosomes consist of a small (40S) and a large (60S) subunit. The 40S small subunit contains 1 molecule of ribosomal RNA (18S rRNA) and 33 different proteins (encoded by 57 genes). The large 60S subunit contains 3 rRNA molecules (25S, 5.8S and 5S rRNA) and 46 different proteins (encoded by 81 genes).

The protein localises to the cytoplasm. Its function is as follows. Component of the ribosome, a large ribonucleoprotein complex responsible for the synthesis of proteins in the cell. The small ribosomal subunit (SSU) binds messenger RNAs (mRNAs) and translates the encoded message by selecting cognate aminoacyl-transfer RNA (tRNA) molecules. The large subunit (LSU) contains the ribosomal catalytic site termed the peptidyl transferase center (PTC), which catalyzes the formation of peptide bonds, thereby polymerizing the amino acids delivered by tRNAs into a polypeptide chain. The nascent polypeptides leave the ribosome through a tunnel in the LSU and interact with protein factors that function in enzymatic processing, targeting, and the membrane insertion of nascent chains at the exit of the ribosomal tunnel. The chain is Small ribosomal subunit protein eS32B from Saccharomyces cerevisiae (strain ATCC 204508 / S288c) (Baker's yeast).